A 70-amino-acid polypeptide reads, in one-letter code: MLRWLLLKLIRFYQVAISPWTPPSCIYTPTCSHYGYEAIKKYGALRGGWMTVKRIARCHPFARGGYDPVP.

Belongs to the UPF0161 family.

Its subcellular location is the cell membrane. Functionally, could be involved in insertion of integral membrane proteins into the membrane. This Chloroflexus aurantiacus (strain ATCC 29366 / DSM 635 / J-10-fl) protein is Putative membrane protein insertion efficiency factor.